We begin with the raw amino-acid sequence, 525 residues long: Cytochrome P450 703A2 (525 aa).

The helical transmembrane segment at 3-23 threads the bilayer; it reads PFLLSIILCSWIFVVVSWKKL. Residue Cys455 coordinates heme.

The protein belongs to the cytochrome P450 family. The cofactor is heme.

The protein resides in the membrane. The enzyme catalyses dodecanoate + reduced [NADPH--hemoprotein reductase] + O2 = 7-hydroxydodecanoate + oxidized [NADPH--hemoprotein reductase] + H2O + H(+). Its function is as follows. Involved in pollen exine and anther epicuticular layer development. Catalyzes the in-chain hydroxylation of lauric acid (C12:0) preferentially on position 7, generating 7-hydroxylated lauric acid. Does not possess activity with other fatty acids (C14:0, C16:0, C16:1, and C18:0). Participates in a conserved pathway of in-chain hydroxylation of lauric acid required for anther cuticle and pollen exine formation. Directly regulated by TDR, a known regulator of tapetum programmed cell death (PCD) and pollen exine formation. This Oryza sativa subsp. japonica (Rice) protein is Cytochrome P450 703A2.